A 476-amino-acid polypeptide reads, in one-letter code: Cysteine--tRNA ligase (476 aa).

Zn(2+) is bound at residue Cys-36. A 'HIGH' region motif is present at residues 38–48 (PTVYDYAHIGN). Residues Cys-221, His-246, and Glu-250 each contribute to the Zn(2+) site. Residues 278–282 (KMSKS) carry the 'KMSKS' region motif. Lys-281 provides a ligand contact to ATP.

This sequence belongs to the class-I aminoacyl-tRNA synthetase family. In terms of assembly, monomer. Zn(2+) is required as a cofactor.

It localises to the cytoplasm. The catalysed reaction is tRNA(Cys) + L-cysteine + ATP = L-cysteinyl-tRNA(Cys) + AMP + diphosphate. This is Cysteine--tRNA ligase from Chlamydia abortus (strain DSM 27085 / S26/3) (Chlamydophila abortus).